Here is a 334-residue protein sequence, read N- to C-terminus: tRNA N6-adenosine threonylcarbamoyltransferase (334 aa).

Positions 112 and 116 each coordinate Fe cation. Substrate is bound by residues 135-139 (VVSGG), Asp-168, Gly-181, Asp-185, and Asn-274. A Fe cation-binding site is contributed by Asp-303.

Belongs to the KAE1 / TsaD family. Requires Fe(2+) as cofactor.

Its subcellular location is the cytoplasm. It catalyses the reaction L-threonylcarbamoyladenylate + adenosine(37) in tRNA = N(6)-L-threonylcarbamoyladenosine(37) in tRNA + AMP + H(+). Functionally, required for the formation of a threonylcarbamoyl group on adenosine at position 37 (t(6)A37) in tRNAs that read codons beginning with adenine. Is involved in the transfer of the threonylcarbamoyl moiety of threonylcarbamoyl-AMP (TC-AMP) to the N6 group of A37, together with TsaE and TsaB. TsaD likely plays a direct catalytic role in this reaction. The sequence is that of tRNA N6-adenosine threonylcarbamoyltransferase from Anaeromyxobacter dehalogenans (strain 2CP-1 / ATCC BAA-258).